The sequence spans 93 residues: uncharacterized protein (93 aa).

It to E.coli YdbD C-terminal region.

This is an uncharacterized protein from Escherichia coli (strain K12).